Here is a 230-residue protein sequence, read N- to C-terminus: Large ribosomal subunit protein uL1 (230 aa).

This sequence belongs to the universal ribosomal protein uL1 family. Part of the 50S ribosomal subunit.

Functionally, binds directly to 23S rRNA. The L1 stalk is quite mobile in the ribosome, and is involved in E site tRNA release. Protein L1 is also a translational repressor protein, it controls the translation of the L11 operon by binding to its mRNA. This Onion yellows phytoplasma (strain OY-M) protein is Large ribosomal subunit protein uL1.